Here is a 521-residue protein sequence, read N- to C-terminus: Peroxisomal membrane protein PEX23 (521 aa).

The interval 1–26 (MPTDPNSNPVSKAGLTPSSINSNISE) is disordered. N-linked (GlcNAc...) asparagine glycosylation is found at asparagine 23 and asparagine 53. The next 2 helical transmembrane spans lie at 111–128 (SYISVLLVTTATLFILYF) and 133–150 (IYLGHLSIVGLIFLYSIF). N-linked (GlcNAc...) asparagine glycosylation is present at asparagine 189. The helical transmembrane segment at 198-217 (LLFTSIFLSPGYILVCYLLF) threads the bilayer. A glycan (N-linked (GlcNAc...) asparagine) is linked at asparagine 279. The tract at residues 425 to 446 (VSPGDDSSTDSASLPHSASETV) is disordered. Over residues 429–446 (DDSSTDSASLPHSASETV) the composition is skewed to polar residues. N-linked (GlcNAc...) asparagine glycosylation is found at asparagine 463 and asparagine 467. Residues 465–486 (SGNITTSAETAPDSAGTAKKRK) form a disordered region.

The protein belongs to the PEX28-32 family. PEX32 subfamily.

The protein localises to the endoplasmic reticulum membrane. In terms of biological role, with PEX29, contributes to the formation of endoplasmic reticulum-mitochondria junctions which are important for mitochondrial function. Involved in lipid dropplets formation. This Ogataea parapolymorpha (strain ATCC 26012 / BCRC 20466 / JCM 22074 / NRRL Y-7560 / DL-1) (Yeast) protein is Peroxisomal membrane protein PEX23.